Reading from the N-terminus, the 300-residue chain is MSYRELVVELAREHAEALSDALLDLGALSVSVEDADADTPDEQPLFGEPGLVPDRTAWQHSRVVALLSADHEPAVLLAAATNEIGLAETPQFVVREVEEQDWVRLTQSQFEPIPIGERIWVVPSWHDAPDPDALVLELDPGLAFGTGSHPTTRLCMEWLEQSVKPGQSVLDYGCGSGILAILAKKCGANPVIGIDIDPQAVESARQNSERNRAEVTYGLPDACPDGEFDIVVANILSNPLKLMASMLASKVKPGGRIALSGVLARQADEVAAVYARYVDISVWREHEGWVCLAGTRRESH.

S-adenosyl-L-methionine contacts are provided by threonine 152, glycine 173, aspartate 195, and asparagine 234.

It belongs to the methyltransferase superfamily. PrmA family.

The protein localises to the cytoplasm. It carries out the reaction L-lysyl-[protein] + 3 S-adenosyl-L-methionine = N(6),N(6),N(6)-trimethyl-L-lysyl-[protein] + 3 S-adenosyl-L-homocysteine + 3 H(+). Its function is as follows. Methylates ribosomal protein L11. The chain is Ribosomal protein L11 methyltransferase from Burkholderia cenocepacia (strain ATCC BAA-245 / DSM 16553 / LMG 16656 / NCTC 13227 / J2315 / CF5610) (Burkholderia cepacia (strain J2315)).